A 209-amino-acid chain; its full sequence is Cytochrome bo(3) ubiquinol oxidase subunit 3 (209 aa).

Topologically, residues 1–29 (MSTAVLNKHLADAHEVGHDHDHAHDSGGN) are cytoplasmic. The chain crosses the membrane as a helical span at residues 30–50 (TVFGFWLYLMTDCVLFASVFA). At 51-72 (TYAVLVHHTAGGPSGKDIFELP) the chain is on the periplasmic side. The helical transmembrane segment at 73–93 (YVLVETAILLVSSCTYGLAML) threads the bilayer. Residues 94 to 102 (SAHKGAKGQ) lie on the Cytoplasmic side of the membrane. The chain crosses the membrane as a helical span at residues 103 to 123 (AIAWLGVTFLLGAAFIGMEIN). Topologically, residues 124 to 143 (EFHHLIAEGFGPSRSAFLSS) are periplasmic. Residues 144-164 (FFTLVGMHGLHVSAGLLWMLV) form a helical membrane-spanning segment. Residues 165–186 (LMAQIWTRGLTAQNNTRMMCLS) are Cytoplasmic-facing. A helical membrane pass occupies residues 187–207 (LFWHFLDIVWICVFTVVYLMG). Residues 208–209 (AL) are Periplasmic-facing.

This sequence belongs to the cytochrome c oxidase subunit 3 family. As to quaternary structure, heterooctamer of two A chains, two B chains, two C chains and two D chains.

The protein resides in the cell inner membrane. Functionally, cytochrome bo(3) ubiquinol terminal oxidase is the component of the aerobic respiratory chain of E.coli that predominates when cells are grown at high aeration. Has proton pump activity across the membrane in addition to electron transfer, pumping 2 protons/electron. The protein is Cytochrome bo(3) ubiquinol oxidase subunit 3 (cyoC) of Pseudomonas aeruginosa (strain ATCC 15692 / DSM 22644 / CIP 104116 / JCM 14847 / LMG 12228 / 1C / PRS 101 / PAO1).